The sequence spans 139 residues: D-ribose pyranase (139 aa).

The active-site Proton donor is H20. Substrate contacts are provided by residues D28, H106, and 128–130; that span reads YAN.

Belongs to the RbsD / FucU family. RbsD subfamily. As to quaternary structure, homodecamer.

It localises to the cytoplasm. The catalysed reaction is beta-D-ribopyranose = beta-D-ribofuranose. It functions in the pathway carbohydrate metabolism; D-ribose degradation; D-ribose 5-phosphate from beta-D-ribopyranose: step 1/2. Catalyzes the interconversion of beta-pyran and beta-furan forms of D-ribose. The polypeptide is D-ribose pyranase (Vibrio vulnificus (strain CMCP6)).